Here is a 1102-residue protein sequence, read N- to C-terminus: Trafficking protein particle complex II-specific subunit 130 (1102 aa).

It belongs to the TMEM1 family. Part of the multisubunit TRAPP (transport protein particle) II complex composed of BET3, BET5, TRS20, TRS23, TRS31, TRS33, TRS65, TRS120 and TRS130. Interacts with YPT31 and YPT32.

The protein resides in the golgi apparatus. Functionally, specific subunit of the TRAPP II complex, a highly conserved vesicle tethering complex that functions in the late Golgi as a guanine nucleotide exchange factor (GEF) for the Golgi YPT1 GTPase. TRS130 plays a role in the YPT GEF activity of TRAPP II in concert with the two other TRAPP II-specific subunits TRS65 and TRS120. Required for both the cytoplasm-to-vacuole targeting (Cvt) pathway and starvation-induced autophagy through its role in ATG8 and ATG9 trafficking. The polypeptide is Trafficking protein particle complex II-specific subunit 130 (TRS130) (Saccharomyces cerevisiae (strain ATCC 204508 / S288c) (Baker's yeast)).